The primary structure comprises 780 residues: ATP-dependent 6-phosphofructokinase, muscle type (780 aa).

An N-acetylthreonine modification is found at Thr-2. Residues 2-390 are N-terminal catalytic PFK domain 1; the sequence is THEEHHAART…NWEVYKLLAH (389 aa). ATP contacts are provided by residues Gly-25, 88–89, and 118–121; these read RC and GDGS. Asp-119 is a binding site for Mg(2+). At Ser-133 the chain carries Phosphoserine. Residues 164–166, Arg-201, 208–210, Glu-264, Arg-292, and 298–301 contribute to the substrate site; these read SID, MGR, and HVQR. The active-site Proton acceptor is the Asp-166. Ser-377 carries the phosphoserine modification. The tract at residues 391-401 is interdomain linker; it reads IRPPAPKSGSY. A C-terminal regulatory PFK domain 2 region spans residues 402-780; the sequence is TVAVMNVGAP…SRKRSGEATV (379 aa). Residues Arg-471 and 528 to 532 each bind beta-D-fructose 2,6-bisphosphate; that span reads TVSNN. The O-linked (GlcNAc) serine glycan is linked to Ser-530. Lys-557 is modified (N6-(2-hydroxyisobutyryl)lysine). Beta-D-fructose 2,6-bisphosphate is bound by residues Arg-566, 573-575, Glu-629, Arg-655, and 661-664; these read MGG and HMQQ. At Ser-667 the chain carries Phosphoserine. Arg-735 contacts beta-D-fructose 2,6-bisphosphate. Ser-775 is subject to Phosphoserine; by PKA.

The protein belongs to the phosphofructokinase type A (PFKA) family. ATP-dependent PFK group I subfamily. Eukaryotic two domain clade 'E' sub-subfamily. In terms of assembly, homo- and heterotetramers. Phosphofructokinase (PFK) enzyme functions as a tetramer composed of different combinations of 3 types of subunits, called PFKM (M), PFKL (L) and PFKP (P). The composition of the PFK tetramer differs according to the tissue type it is present in. The kinetic and regulatory properties of the tetrameric enzyme are dependent on the subunit composition, hence can vary across tissues. Interacts (via C-terminus) with HK1 (via N-terminal spermatogenic cell-specific region). It depends on Mg(2+) as a cofactor. GlcNAcylation decreases enzyme activity.

It is found in the cytoplasm. The catalysed reaction is beta-D-fructose 6-phosphate + ATP = beta-D-fructose 1,6-bisphosphate + ADP + H(+). It functions in the pathway carbohydrate degradation; glycolysis; D-glyceraldehyde 3-phosphate and glycerone phosphate from D-glucose: step 3/4. Its activity is regulated as follows. Allosterically activated by ADP, AMP, or fructose 2,6-bisphosphate, and allosterically inhibited by ATP or citrate. Catalyzes the phosphorylation of D-fructose 6-phosphate to fructose 1,6-bisphosphate by ATP, the first committing step of glycolysis. The polypeptide is ATP-dependent 6-phosphofructokinase, muscle type (PFKM) (Oryctolagus cuniculus (Rabbit)).